The primary structure comprises 206 residues: Large ribosomal subunit protein uL4 (206 aa).

This sequence belongs to the universal ribosomal protein uL4 family. Part of the 50S ribosomal subunit.

One of the primary rRNA binding proteins, this protein initially binds near the 5'-end of the 23S rRNA. It is important during the early stages of 50S assembly. It makes multiple contacts with different domains of the 23S rRNA in the assembled 50S subunit and ribosome. In terms of biological role, forms part of the polypeptide exit tunnel. In Cereibacter sphaeroides (strain KD131 / KCTC 12085) (Rhodobacter sphaeroides), this protein is Large ribosomal subunit protein uL4.